We begin with the raw amino-acid sequence, 144 residues long: Large ribosomal subunit protein uL16 (144 aa).

This sequence belongs to the universal ribosomal protein uL16 family. As to quaternary structure, part of the 50S ribosomal subunit.

In terms of biological role, binds 23S rRNA and is also seen to make contacts with the A and possibly P site tRNAs. The chain is Large ribosomal subunit protein uL16 from Bacillus cytotoxicus (strain DSM 22905 / CIP 110041 / 391-98 / NVH 391-98).